Reading from the N-terminus, the 77-residue chain is Secapin-2 (77 aa).

Residues 1-32 (MKNYSKNATYLITVLLFSFVTMLLIIPSKCEA) form the signal peptide. Positions 33–52 (VSNDMQPLEARTADLVQQPR) are excised as a propeptide. The cysteines at positions 61 and 72 are disulfide-linked. The residue at position 77 (Pro-77) is a Proline amide.

It belongs to the secapin family. As to expression, expressed by the venom gland.

Its subcellular location is the secreted. In terms of biological role, serine protease inhibitor which exhibits antifibrinolytic, antielastolytic and antimicrobial activities. Displays antimicrobial activity against bacteria and fungi. Likely functions in the innate immune response to microbial infection and possibly in the venom, as an antifibrinolytic agent. Induces hyperalgesia and edema mediated by leukotrienes when injected into mice. Does not induce hemolytic activity, mast cell degranulation, or chemotactic activity for polymorphonucleated leukocytes (PMNL). The chain is Secapin-2 from Apis mellifera (Honeybee).